The chain runs to 171 residues: Co-chaperone protein HscB (171 aa).

The region spanning 2–74 is the J domain; the sequence is DYFTLFGLPA…LTRAEYLLSL (73 aa).

Belongs to the HscB family. Interacts with HscA and stimulates its ATPase activity. Interacts with IscU.

In terms of biological role, co-chaperone involved in the maturation of iron-sulfur cluster-containing proteins. Seems to help targeting proteins to be folded toward HscA. This is Co-chaperone protein HscB from Salmonella schwarzengrund (strain CVM19633).